A 37-amino-acid polypeptide reads, in one-letter code: MKVRASVKAICKDCKIVKRSGVVRVICANSKHKQRQG.

It belongs to the bacterial ribosomal protein bL36 family.

The protein is Large ribosomal subunit protein bL36 of Ureaplasma parvum serovar 3 (strain ATCC 27815 / 27 / NCTC 11736).